The primary structure comprises 120 residues: NAD(P)H-quinone oxidoreductase subunit 3, chloroplastic (120 aa).

The next 3 membrane-spanning stretches (helical) occupy residues 14–34, 64–84, and 88–108; these read LIIS…LAPI, MFAL…PWAM, and VLGV…IVGS.

It belongs to the complex I subunit 3 family. NDH is composed of at least 16 different subunits, 5 of which are encoded in the nucleus.

It is found in the plastid. Its subcellular location is the chloroplast thylakoid membrane. It catalyses the reaction a plastoquinone + NADH + (n+1) H(+)(in) = a plastoquinol + NAD(+) + n H(+)(out). The catalysed reaction is a plastoquinone + NADPH + (n+1) H(+)(in) = a plastoquinol + NADP(+) + n H(+)(out). Functionally, NDH shuttles electrons from NAD(P)H:plastoquinone, via FMN and iron-sulfur (Fe-S) centers, to quinones in the photosynthetic chain and possibly in a chloroplast respiratory chain. The immediate electron acceptor for the enzyme in this species is believed to be plastoquinone. Couples the redox reaction to proton translocation, and thus conserves the redox energy in a proton gradient. This is NAD(P)H-quinone oxidoreductase subunit 3, chloroplastic from Cicer arietinum (Chickpea).